We begin with the raw amino-acid sequence, 141 residues long: Hemoglobin subunit alpha-A (141 aa).

One can recognise a Globin domain in the interval 1–141 (VLSPADKSNV…VGTVLTAKYR (141 aa)). Histidine 58 contributes to the O2 binding site. Residue histidine 87 coordinates heme b.

The protein belongs to the globin family. Heterotetramer of two alpha chains and two beta chains. In terms of tissue distribution, red blood cells.

In terms of biological role, involved in oxygen transport from the lung to the various peripheral tissues. The polypeptide is Hemoglobin subunit alpha-A (HBAA) (Passer montanus (Eurasian tree sparrow)).